A 109-amino-acid polypeptide reads, in one-letter code: uncharacterized protein (109 aa).

The tract at residues 67 to 96 (YFGNKLWRPTPRSGQSGQSRPKTGPHGSQR) is disordered. Polar residues predominate over residues 78-87 (RSGQSGQSRP).

This is an uncharacterized protein from Saccharomyces cerevisiae (strain ATCC 204508 / S288c) (Baker's yeast).